Reading from the N-terminus, the 262-residue chain is 5'-nucleotidase SurE (262 aa).

Positions 9, 10, 40, and 95 each coordinate a divalent metal cation.

Belongs to the SurE nucleotidase family. Requires a divalent metal cation as cofactor.

The protein resides in the cytoplasm. It catalyses the reaction a ribonucleoside 5'-phosphate + H2O = a ribonucleoside + phosphate. In terms of biological role, nucleotidase that shows phosphatase activity on nucleoside 5'-monophosphates. The sequence is that of 5'-nucleotidase SurE from Aliarcobacter butzleri (strain RM4018) (Arcobacter butzleri).